Reading from the N-terminus, the 1071-residue chain is DNA-directed RNA polymerase subunit beta (1071 aa).

Belongs to the RNA polymerase beta chain family. In terms of assembly, in plastids the minimal PEP RNA polymerase catalytic core is composed of four subunits: alpha, beta, beta', and beta''. When a (nuclear-encoded) sigma factor is associated with the core the holoenzyme is formed, which can initiate transcription.

It localises to the plastid. The protein resides in the chloroplast. It catalyses the reaction RNA(n) + a ribonucleoside 5'-triphosphate = RNA(n+1) + diphosphate. In terms of biological role, DNA-dependent RNA polymerase catalyzes the transcription of DNA into RNA using the four ribonucleoside triphosphates as substrates. This chain is DNA-directed RNA polymerase subunit beta, found in Panax ginseng (Korean ginseng).